We begin with the raw amino-acid sequence, 994 residues long: Cation-chloride cotransporter 2 (994 aa).

Positions 1–28 are disordered; sequence MERGGFGGAGRHDEEAPAMRPAPQQRYR. The Cytoplasmic segment spans residues 1 to 139; it reads MERGGFGGAG…GHPKETETKL (139 aa). Residues 140–160 form a helical membrane-spanning segment; it reads DTMMGVFVPCLQNILGIIYYI. Residues 161 to 174 lie on the Extracellular side of the membrane; the sequence is RFTWIVGMGGVWQS. Residues 175 to 195 form a helical membrane-spanning segment; that stretch reads LVLVAFCGSCTFLTTISLSAI. At 196–221 the chain is on the cytoplasmic side; sequence ATNGAMKGGGPYYLIGRALGPEVGVS. Residues 222–242 traverse the membrane as a helical segment; it reads IGLCFFLGNAVAGAMYVLGAV. Topologically, residues 243–287 are extracellular; sequence ETFLDAVPSAEFFQESVTVVTNTFVNGTAAGNATTISTPNLHDLQ. N-linked (GlcNAc...) asparagine glycans are attached at residues Asn268 and Asn274. Residues 288–308 form a helical membrane-spanning segment; that stretch reads VYGIIVTILLCFIVFGGVKII. Over 309 to 311 the chain is Cytoplasmic; sequence NKV. The chain crosses the membrane as a helical span at residues 312–332; that stretch reads APAFLIPVLFSILCIYIGVFI. The Extracellular segment spans residues 333–372; that stretch reads APRPNASKWITGLSITTLKDNWSSDYQRTNNAGVPDPNGS. N-linked (GlcNAc...) asparagine glycans are attached at residues Asn337, Asn353, and Asn370. Residues 373–393 traverse the membrane as a helical segment; it reads IYWDFNALLGLYFPAVTGIMA. Residues 394 to 412 are Cytoplasmic-facing; that stretch reads GSNRSASLKDTQRSIPIGT. Residues 413–433 form a helical membrane-spanning segment; the sequence is LHATISTTMMYLLSVFLFGAL. The Extracellular segment spans residues 434 to 448; that stretch reads STREGLLTDRLLCAA. A helical membrane pass occupies residues 449–469; sequence VAWPSPAVVYAGIILSTLGAA. Over 470 to 505 the chain is Cytoplasmic; sequence LQSLTGAPRLLAAIANDDILPVLNYFKAYEGSEPHV. Residues 506–526 form a helical membrane-spanning segment; it reads ATLFTSFICISCVIIGNLDVI. The Extracellular portion of the chain corresponds to 527-529; that stretch reads TPT. Residues 530–552 form a helical membrane-spanning segment; that stretch reads ITMFFLLCYAGVNLSCFLLDLLD. Residues 553 to 558 are Cytoplasmic-facing; it reads APSWRP. Residues 559–579 form a helical membrane-spanning segment; the sequence is RWKLHHWSLSLIGALLCIVIM. Residues 580–585 lie on the Extracellular side of the membrane; that stretch reads FMISWT. A helical transmembrane segment spans residues 586 to 606; the sequence is FTVVSLALASLIYYYVSLKGK. At 607–994 the chain is on the cytoplasmic side; that stretch reads AGDWGDGFKS…YRRDVVTLFT (388 aa).

Belongs to the SLC12A transporter family.

It localises to the membrane. Functionally, probable cation/chloride cotransporter. This chain is Cation-chloride cotransporter 2 (CCC2), found in Oryza sativa subsp. japonica (Rice).